Reading from the N-terminus, the 259-residue chain is Eukaryotic translation initiation factor 4E1 (259 aa).

The segment at 1-70 (MQSDFHRMKN…TATTTAPAGD (70 aa)) is disordered. Residues 18–27 (FKTSAPSTEQ) show a composition bias toward polar residues. Over residues 41-51 (EAKDVKPKEDP) the composition is skewed to basic and acidic residues. The span at 54-70 (TGEPAGNTATTTAPAGD) shows a compositional bias: low complexity. Residues 100 to 101 (WE), 146 to 147 (WE), and 199 to 204 (RGKSNK) each bind mRNA.

Belongs to the eukaryotic initiation factor 4E family. EIF4F is a multi-subunit complex, the composition of which varies with external and internal environmental conditions. It is composed of at least eIF4A, eIF4E1 and eIF4G1. Recruited by cup in oocytes and in early embryos, preventing the interaction with eIF4G. The interaction with cup therefore prevents the translation of key transcripts such as oskar (osk) and nanos (nos) in some regions in the early embryo. Interacts with mxt. Interacts with 4E-T and Thor. Forms a RNP containing at least me31B, eIF4E1, cup, tral and pAbp; this interaction is required for the translational silencing of maternal mRNAs during the maternal-to-zygotic transition. In terms of processing, phosphorylation increases the ability of the protein to bind to mRNA caps and to form the eIF4F complex. As to expression, expressed at the posterior end of developing oocytes (at protein level). Preferential expression in the pole cells, at different developmental stages.

The protein localises to the cytoplasm. The protein resides in the cytoplasmic ribonucleoprotein granule. It localises to the nucleus. It is found in the nuclear body. In terms of biological role, recognizes and binds the 7-methylguanosine (m7G)-containing mRNA cap during an early step in the initiation of protein synthesis and facilitates ribosome binding by inducing the unwinding of the mRNAs secondary structures. In 0-1 hour embryos, forms a complex with me31B, cup, tral and pAbp which binds to various mRNAs including maternal mRNAs, and down-regulates their expression during the maternal-to-zygotic transition. This is Eukaryotic translation initiation factor 4E1 from Drosophila melanogaster (Fruit fly).